The following is a 134-amino-acid chain: UPF0102 protein Dshi_2830 (134 aa).

It belongs to the UPF0102 family.

This chain is UPF0102 protein Dshi_2830, found in Dinoroseobacter shibae (strain DSM 16493 / NCIMB 14021 / DFL 12).